A 468-amino-acid chain; its full sequence is uncharacterized protein (468 aa).

A signal peptide spans 1 to 19 (MRVLSVLLVALTVAGSAYS). Residues Asn86 and Asn334 are each glycosylated (N-linked (GlcNAc...) asparagine). Positions 401-421 (NPSTNLPETSPPTEQPTAPPA) are disordered. A compositionally biased stretch (pro residues) spans 409–421 (TSPPTEQPTAPPA). Asn435 is a glycosylation site (N-linked (GlcNAc...) asparagine). Asn444 carries GPI-like-anchor amidated asparagine lipidation. Residues 445-468 (SASSIEMSKLVVAILSLFILAFFH) constitute a propeptide, removed in mature form.

The protein localises to the cell membrane. This is an uncharacterized protein from Dictyostelium discoideum (Social amoeba).